The chain runs to 465 residues: Cysteine--tRNA ligase (465 aa).

A Zn(2+)-binding site is contributed by cysteine 30. The 'HIGH' region signature appears at 32-42 (ITVYDYCHVGH). Residues cysteine 214, histidine 239, and glutamate 243 each coordinate Zn(2+). Residues 271–275 (KMSKS) carry the 'KMSKS' region motif. Residue lysine 274 participates in ATP binding.

Belongs to the class-I aminoacyl-tRNA synthetase family. In terms of assembly, monomer. Zn(2+) is required as a cofactor.

It localises to the cytoplasm. It catalyses the reaction tRNA(Cys) + L-cysteine + ATP = L-cysteinyl-tRNA(Cys) + AMP + diphosphate. The sequence is that of Cysteine--tRNA ligase from Burkholderia orbicola (strain MC0-3).